Consider the following 224-residue polypeptide: IAP-like protein p27 (224 aa).

One copy of the BIR repeat lies at 29 to 92 (VDARNQSFAI…GFWSRNCGFM (64 aa)). Residues Cys62, Cys65, His82, and Cys89 each coordinate Zn(2+).

Not essential for growth or virulence. Does not have antiapoptotic function. This is IAP-like protein p27 (p27) from Ornithodoros (relapsing fever ticks).